A 358-amino-acid polypeptide reads, in one-letter code: MSTAIRSGRQSNWEAFCQWVTDTNNRIYVGWFGVLMIPCLLAATICFTIAFIAAPPVDIDGIREPVAGSLIYGNNIISGAVIPSSNAIGLHFYPIWEAASLDEWLYNGGPYQLVCFHFLIGISAYMGRQWELSYRLGMRPWICVAYSAPLSAAMAVFLVYPFGQGSFSDGMPLGISGTFNFMLVFQAEHNILMHPFHMLGVAGVFGGSLFSAMHGSLVTSSLVRETTEAESQNYGYKFGQEEETYNIVAAHGYFGRLIFQYASFNNSRSLHFFLGAWPVVGIWFTSMGISTMAFNLNGFNFNQSILDSQGRVLNTWADVLNRANLGMEVQHERNAHNFPLDLAAAESTPVALQAPAIG.

3 consecutive transmembrane segments (helical) span residues 28–45, 117–132, and 141–155; these read YVGWFGVLMIPCLLAATI, HFLIGISAYMGRQWEL, and WICVAYSAPLSAAMA. His-117 serves as a coordination point for chlorophyll a. Tyr-125 is a pheophytin a binding site. Residues Asp-169 and Glu-188 each contribute to the [CaMn4O5] cluster site. A helical membrane pass occupies residues 196–217; it reads FHMLGVAGVFGGSLFSAMHGSL. His-197 is a chlorophyll a binding site. Residues His-214 and 263-264 each bind a quinone; that span reads SF. Residue His-214 participates in Fe cation binding. His-271 contacts Fe cation. A helical transmembrane segment spans residues 273 to 287; the sequence is FLGAWPVVGIWFTSM. 4 residues coordinate [CaMn4O5] cluster: His-331, Glu-332, Asp-341, and Ala-343. Residues 344–358 constitute a propeptide that is removed on maturation; it reads AAESTPVALQAPAIG.

It belongs to the reaction center PufL/M/PsbA/D family. In terms of assembly, PSII is composed of 1 copy each of membrane proteins PsbA, PsbB, PsbC, PsbD, PsbE, PsbF, PsbH, PsbI, PsbJ, PsbK, PsbL, PsbM, PsbT, PsbX, PsbY, PsbZ, Psb30/Ycf12, peripheral proteins PsbO, CyanoQ (PsbQ), PsbU, PsbV and a large number of cofactors. It forms dimeric complexes. The D1/D2 heterodimer binds P680, chlorophylls that are the primary electron donor of PSII, and subsequent electron acceptors. It shares a non-heme iron and each subunit binds pheophytin, quinone, additional chlorophylls, carotenoids and lipids. D1 provides most of the ligands for the Mn4-Ca-O5 cluster of the oxygen-evolving complex (OEC). There is also a Cl(-1) ion associated with D1 and D2, which is required for oxygen evolution. The PSII complex binds additional chlorophylls, carotenoids and specific lipids. serves as cofactor. Post-translationally, tyr-160 forms a radical intermediate that is referred to as redox-active TyrZ, YZ or Y-Z. C-terminally processed by CtpA; processing is essential to allow assembly of the oxygen-evolving complex and thus photosynthetic growth.

It localises to the cellular thylakoid membrane. The catalysed reaction is 2 a plastoquinone + 4 hnu + 2 H2O = 2 a plastoquinol + O2. Functionally, photosystem II (PSII) is a light-driven water:plastoquinone oxidoreductase that uses light energy to abstract electrons from H(2)O, generating O(2) and a proton gradient subsequently used for ATP formation. It consists of a core antenna complex that captures photons, and an electron transfer chain that converts photonic excitation into a charge separation. The D1/D2 (PsbA/PsbD) reaction center heterodimer binds P680, the primary electron donor of PSII as well as several subsequent electron acceptors. The chain is Photosystem II protein D1 2 from Synechococcus sp. (strain CC9605).